Consider the following 177-residue polypeptide: R-phycoerythrin beta chain (177 aa).

The phycourobilin site is built by C50 and C61. Position 72 is an N4-methylasparagine (N72). Positions 82 and 158 each coordinate (2R,3E)-phycoerythrobilin.

It belongs to the phycobiliprotein family. As to quaternary structure, heterodimer of an alpha and a beta chain. Post-translationally, contains two covalently linked phycoerythrobilin chromophores and one covalently linked phycourobilin chromophore.

It localises to the plastid. The protein resides in the chloroplast thylakoid membrane. Its function is as follows. Light-harvesting photosynthetic bile pigment-protein from the phycobiliprotein complex. The polypeptide is R-phycoerythrin beta chain (cpeB) (Pyropia haitanensis (Red seaweed)).